The sequence spans 143 residues: Large ribosomal subunit protein uL16 (143 aa).

Over residues 1 to 17 (MLQPKRTKFRKAHKGRI) the composition is skewed to basic residues. The interval 1 to 20 (MLQPKRTKFRKAHKGRIHGN) is disordered.

The protein belongs to the universal ribosomal protein uL16 family. As to quaternary structure, part of the 50S ribosomal subunit.

Binds 23S rRNA and is also seen to make contacts with the A and possibly P site tRNAs. This Zymomonas mobilis subsp. mobilis (strain ATCC 31821 / ZM4 / CP4) protein is Large ribosomal subunit protein uL16.